A 1613-amino-acid polypeptide reads, in one-letter code: Vitellogenin-2 (1613 aa).

The first 15 residues, 1–15 (MRSIIIASLVALALA), serve as a signal peptide directing secretion. The Vitellogenin domain occupies 24-687 (FEPKTDYHYK…EKNSFLPKDL (664 aa)). N-linked (GlcNAc...) asparagine glycosylation occurs at N1268. Positions 1308 to 1477 (SVCKVQKNQI…SYLLKNEECE (170 aa)) constitute a VWFD domain. Cystine bridges form between C1310–C1440 and C1332–C1476. The interval 1491–1531 (KYERDEEQSDEYSSEETYDYEQENTKKSQKNQRSQKKSDLV) is disordered. Acidic residues predominate over residues 1495 to 1512 (DEEQSDEYSSEETYDYEQ).

In terms of tissue distribution, expressed in the intestine of adult hermaphrodites.

Its subcellular location is the secreted. In terms of biological role, precursor of the egg-yolk proteins that are sources of nutrients during embryonic development. Together with other vitellogenins, may play a role in modulating life-span, acting via induction of autophagy and lysosomal lipolysis. The polypeptide is Vitellogenin-2 (vit-2) (Caenorhabditis elegans).